The following is a 92-amino-acid chain: Acylphosphatase (92 aa).

The 88-residue stretch at 5-92 folds into the Acylphosphatase-like domain; sequence ATAAYVYGVV…TDYKGFTIRY (88 aa). Catalysis depends on residues Arg-20 and Asn-38.

It belongs to the acylphosphatase family.

It carries out the reaction an acyl phosphate + H2O = a carboxylate + phosphate + H(+). This is Acylphosphatase (acyP) from Pectobacterium atrosepticum (strain SCRI 1043 / ATCC BAA-672) (Erwinia carotovora subsp. atroseptica).